A 174-amino-acid polypeptide reads, in one-letter code: Nucleoside diphosphate kinase (174 aa).

Residues K14, F62, R90, T96, and R107 each contribute to the ATP site. H123 (pros-phosphohistidine intermediate) is an active-site residue.

Belongs to the NDK family. Requires Mg(2+) as cofactor.

It is found in the cytoplasm. The enzyme catalyses a 2'-deoxyribonucleoside 5'-diphosphate + ATP = a 2'-deoxyribonucleoside 5'-triphosphate + ADP. The catalysed reaction is a ribonucleoside 5'-diphosphate + ATP = a ribonucleoside 5'-triphosphate + ADP. Functionally, major role in the synthesis of nucleoside triphosphates other than ATP. The ATP gamma phosphate is transferred to the NDP beta phosphate via a ping-pong mechanism, using a phosphorylated active-site intermediate. This chain is Nucleoside diphosphate kinase, found in Thermococcus kodakarensis (strain ATCC BAA-918 / JCM 12380 / KOD1) (Pyrococcus kodakaraensis (strain KOD1)).